The primary structure comprises 686 residues: Acyl-CoA synthetase short-chain family member 3, mitochondrial (686 aa).

The transit peptide at 1–29 (MKPSWLQCRKVTGAGGLGGSLPASSPARG) directs the protein to the mitochondrion. 226 to 229 (EPGR) contacts CoA. ATP-binding positions include 424–426 (GER) and 445–450 (DHWWQT). Lys517 carries the N6-succinyllysine modification. Lys523 carries the N6-acetyllysine modification. Positions 538, 553, and 564 each coordinate ATP. Arg623 contacts CoA.

It belongs to the ATP-dependent AMP-binding enzyme family.

The protein resides in the mitochondrion matrix. The catalysed reaction is acetate + ATP + CoA = acetyl-CoA + AMP + diphosphate. It carries out the reaction propanoate + ATP + CoA = propanoyl-CoA + AMP + diphosphate. The enzyme catalyses butanoate + ATP + CoA = butanoyl-CoA + AMP + diphosphate. In terms of biological role, catalyzes the synthesis of acetyl-CoA from short-chain fatty acids. Propionate is the preferred substrate but can also utilize acetate and butyrate with a much lower affinity. The protein is Acyl-CoA synthetase short-chain family member 3, mitochondrial (ACSS3) of Bos taurus (Bovine).